We begin with the raw amino-acid sequence, 393 residues long: Homogentisate phytyltransferase 1, chloroplastic (393 aa).

Residues Met-1–Arg-36 constitute a chloroplast transit peptide. Transmembrane regions (helical) follow at residues Thr-108–Ser-128, Leu-133–Val-153, Tyr-170–Phe-190, Pro-205–Leu-227, Phe-232–Phe-252, Leu-271–Ile-291, Val-314–Ala-334, Phe-338–Ala-358, and Ile-371–Phe-391.

The protein belongs to the UbiA prenyltransferase family.

The protein resides in the plastid. It is found in the chloroplast membrane. It catalyses the reaction phytyl diphosphate + homogentisate + H(+) = 2-methyl-6-phytyl-1,4-benzene-1,4-diol + CO2 + diphosphate. It functions in the pathway cofactor biosynthesis; tocopherol biosynthesis. In terms of biological role, involved in the synthesis of tocopherol (vitamin E). Catalyzes the condensation of homogentisate and phytyl diphosphate to form dimethylphytylhydrquinone. Low activity with geranylgeranyl diphosphate as substrate, but no activity with farnesyl diphosphate or solanesyl diphosphate. Tocopherol functions to limit lipid oxidation during seed desiccation, quiescence and germination and early seedling development. Protects thylakoid membrane lipids from photooxidation and is required for low-temperature adaptation. This is Homogentisate phytyltransferase 1, chloroplastic (HPT1) from Arabidopsis thaliana (Mouse-ear cress).